The chain runs to 388 residues: Na(+)/H(+) antiporter NhaA (388 aa).

11 helical membrane-spanning segments follow: residues 14–34 (GGIILIIAAALAMLMANMGAT), 59–79 (MLLWINDALMAVFFLLIGLEV), 95–115 (AFPVIAAIGGMIVPALLYLAF), 125–145 (GWAIPAATDIAFALGVLALLG), 154–174 (IFLMALAIIDDLGAIIIIALF), 179–199 (LSIVSLGVAAFAIAVLALLNL), 219–239 (VLKSGVHATLAGVIVGFFIPL), 254–274 (VLHPWVAYLILPLFAFANAGV), 292–312 (IIAGLLIGKPLGISLFCWLAL), 328–348 (IMAVGILCGIGFTMSIFIASL), and 360–380 (WAKLGILIGSLLSAVVGYSWL).

The protein belongs to the NhaA Na(+)/H(+) (TC 2.A.33) antiporter family.

The protein resides in the cell inner membrane. It catalyses the reaction Na(+)(in) + 2 H(+)(out) = Na(+)(out) + 2 H(+)(in). In terms of biological role, na(+)/H(+) antiporter that extrudes sodium in exchange for external protons. The chain is Na(+)/H(+) antiporter NhaA from Salmonella paratyphi A (strain ATCC 9150 / SARB42).